A 138-amino-acid chain; its full sequence is Probable lactoylglutathione lyase (138 aa).

The VOC domain maps to 5-129 (RILHTMLRVG…DGYMIELIQN (125 aa)). His-8 is a binding site for Ni(2+). Arg-12 serves as a coordination point for substrate. Glu-59 contacts Ni(2+). Substrate contacts are provided by Asn-63 and His-77. Ni(2+) contacts are provided by His-77 and Glu-125. Residue Glu-125 is the Proton donor/acceptor of the active site.

Belongs to the glyoxalase I family. Ni(2+) is required as a cofactor.

It catalyses the reaction (R)-S-lactoylglutathione = methylglyoxal + glutathione. It functions in the pathway secondary metabolite metabolism; methylglyoxal degradation; (R)-lactate from methylglyoxal: step 1/2. Functionally, catalyzes the conversion of hemimercaptal, formed from methylglyoxal and glutathione, to S-lactoylglutathione. The sequence is that of Probable lactoylglutathione lyase (gloA) from Vibrio cholerae serotype O1 (strain ATCC 39315 / El Tor Inaba N16961).